The primary structure comprises 208 residues: Large ribosomal subunit protein uL3 (208 aa).

Residues 123–147 form a disordered region; it reads RHGQSRGPMAHGSRYHRRPGSMGPV.

It belongs to the universal ribosomal protein uL3 family. As to quaternary structure, part of the 50S ribosomal subunit. Forms a cluster with proteins L14 and L19.

Functionally, one of the primary rRNA binding proteins, it binds directly near the 3'-end of the 23S rRNA, where it nucleates assembly of the 50S subunit. This is Large ribosomal subunit protein uL3 from Streptococcus uberis (strain ATCC BAA-854 / 0140J).